The sequence spans 42 residues: Small, acid-soluble spore protein L (42 aa).

The disordered stretch occupies residues 1-42 (MKKKDKGRLTGGVTPQGDLEGNTHNDPKTELEERAKKSNTKR). Over residues 21-36 (GNTHNDPKTELEERAK) the composition is skewed to basic and acidic residues.

Its subcellular location is the spore core. In Bacillus subtilis (strain 168), this protein is Small, acid-soluble spore protein L (sspL).